The sequence spans 686 residues: Lysophospholipase 3 (686 aa).

The N-terminal stretch at 1 to 26 (MIRPLCSKIIISYIFAISQFLLAANA) is a signal peptide. In terms of domain architecture, PLA2c spans 39–592 (SCPDDINLVR…KNYCWNGTLD (554 aa)). Asn-56, Asn-82, Asn-129, Asn-166, Asn-221, Asn-283, Asn-313, Asn-351, Asn-495, Asn-519, Asn-547, Asn-571, Asn-588, and Asn-614 each carry an N-linked (GlcNAc...) asparagine glycan. Asn-659 carries the GPI-anchor amidated asparagine lipid modification. A propeptide spans 660 to 686 (SGSHLSGISVKFSAMIMLTLLMFTGAV) (removed in mature form).

This sequence belongs to the lysophospholipase family.

Its subcellular location is the cell membrane. It carries out the reaction a 1-acyl-sn-glycero-3-phosphocholine + H2O = sn-glycerol 3-phosphocholine + a fatty acid + H(+). Sequentially removes both fatty acyl groups from diacylglycerophospholipids and therefore has both phospholipase A and lysophospholipase activities. Substrate preference is phosphatidylserine &gt; phosphatidylinositol. Does not cleave phosphatidylcholine, phosphatidylethanolamine, phosphatidic acid and phosphatidylinositol-bisphosphate. Mainly responsible for the degradation of phosphatidylinositol in vivo. In Saccharomyces cerevisiae (strain ATCC 204508 / S288c) (Baker's yeast), this protein is Lysophospholipase 3 (PLB3).